The sequence spans 122 residues: Phycocyanin PC645 alpha-2 subunit (122 aa).

(2R,3E)-phycocyanobilin is bound by residues Asp-54 and Arg-68. Mesobiliverdin-binding residues include Cys-70, Lys-76, Glu-77, and Cys-92.

The protein belongs to the phycoerythrin family. Heterotetramer of 2 different alpha chains and 2 identical beta chains which form 2 alpha-beta heterodimers within the heterotetramer. In terms of processing, contains two phycocyanobilin chromophores and one mesobiliverdin chromophore with binding mediated by both the alpha and beta subunits.

It localises to the plastid. The protein resides in the chloroplast thylakoid membrane. Light-harvesting photosynthetic tetrapyrrole chromophore-protein from the phycobiliprotein complex. This chain is Phycocyanin PC645 alpha-2 subunit, found in Chroomonas sp. (strain CCMP270).